A 505-amino-acid chain; its full sequence is Protein DETOXIFICATION 50 (505 aa).

Transmembrane regions (helical) follow at residues 46–66, 78–98, 121–141, 155–175, 194–214, 219–239, 275–295, 305–325, 344–364, 380–400, 424–444, and 446–466; these read LVLT…FLGG, AAAF…MGVE, IILL…MEKI, AHIF…LHPL, IASF…GLGI, LSGV…ICFF, ISVC…GFLL, GILI…SLGV, AAIV…AFTV, IMKL…GNCP, AFYA…GFGF, and GLWL…MAAT.

It belongs to the multi antimicrobial extrusion (MATE) (TC 2.A.66.1) family. In terms of tissue distribution, preferentially expressed in rosette leaves. Detected mainly in the vascular tissues and guard cells. Mostly detected at reproductive stages in young anthers, in mature pollens and during pollen germination on the pistil. Also expressed in developing seeds.

Its subcellular location is the cell membrane. It localises to the late endosome membrane. Functionally, functions as a multidrug and toxin extrusion transporter in the export of abscisic acid (ABA) in guard cells. Plays a role in ABA-mediated growth inhibition and responses to drought conditions. May act as a negative regulator of hypocotyl cell elongation in the light. This chain is Protein DETOXIFICATION 50, found in Arabidopsis thaliana (Mouse-ear cress).